The following is a 608-amino-acid chain: UvrABC system protein C (608 aa).

The GIY-YIG domain occupies His13–Val91. A UVR domain is found at Gln201–Val236.

The protein belongs to the UvrC family. As to quaternary structure, interacts with UvrB in an incision complex.

It localises to the cytoplasm. Functionally, the UvrABC repair system catalyzes the recognition and processing of DNA lesions. UvrC both incises the 5' and 3' sides of the lesion. The N-terminal half is responsible for the 3' incision and the C-terminal half is responsible for the 5' incision. In Actinobacillus succinogenes (strain ATCC 55618 / DSM 22257 / CCUG 43843 / 130Z), this protein is UvrABC system protein C.